A 548-amino-acid chain; its full sequence is Aspergilol synthase AuAP450 (548 aa).

Residues 38–58 traverse the membrane as a helical segment; sequence PQLVITTLGALLLAAFYLLPS. Residue cysteine 489 coordinates heme.

It belongs to the cytochrome P450 family. Heme serves as cofactor.

It is found in the membrane. The protein operates within secondary metabolite biosynthesis; terpenoid biosynthesis. Cytochrome P450 monooxygenase; part of the gene cluster that mediates the biosynthesis of aspergiltriene A, aspergildienes A-D and aspergilols A-D. The bifunctional terpene synthase AuAS converts DMAPP and IPP into sesterterpenes. The C-terminal prenyltransferase (PT) domain of AuAS catalyzes formation of GFPP, whereas the N-terminal terpene cyclase (TC) domain catalyzes the cyclization of GFPP into 5 distinct sesterterpenes: aspergiltriene A, aspergildiene A, aspergildiene B, aspergildiene C and aspergildiene D. The cytochrome P450 monooxygenase AP450 then hydroxylates the aspergildienes A, B, C and D to yield the corresponding sesterterpene alcohols, aspergilols A-D. This chain is Aspergilol synthase AuAP450, found in Aspergillus ustus.